The sequence spans 245 residues: MDAATIRETAFAMPLTSPGFPKGPYRFVNREYMIITYRTDRAALEKIVPEPLELADDVVKYEFIRMPDSTGFGDYTESGQVIPVRYKGKPGVYVHSMFLNDHPPIAGGREIWGFPKKLARPVLEVEIDTLVGTLDYGRIRVATGTMGYKHHTLDHDPVLSSMHEPNFLLKIIPHVDGSPRICELVRYHMSDIVLKGAWTGPAALALYPHALAPVADLPVREVVAASHILADMTLDLGEVVHDYLA.

The Schiff-base intermediate with acetoacetate role is filled by Lys-116.

It belongs to the ADC family.

The enzyme catalyses acetoacetate + H(+) = acetone + CO2. Catalyzes the conversion of acetoacetate to acetone and carbon dioxide. This Acidiphilium cryptum (strain JF-5) protein is Acetoacetate decarboxylase.